A 353-amino-acid polypeptide reads, in one-letter code: Guanine nucleotide-binding protein subunit alpha (353 aa).

The N-myristoyl glycine moiety is linked to residue Gly2. Residue Cys3 is the site of S-palmitoyl cysteine attachment. The region spanning Asn33–Leu353 is the G-alpha domain. The tract at residues Lys36 to Thr49 is G1 motif. Residues Glu44, Ser45, Gly46, Lys47, Ser48, Thr49, Asp150, Leu175, Thr181, Gly203, Asn269, Lys270, Asp272, and Ala325 each coordinate GTP. Ser48 is a Mg(2+) binding site. The interval Asp173–Thr181 is G2 motif. Thr181 serves as a coordination point for Mg(2+). The G3 motif stretch occupies residues Tyr196–Arg205. The G4 motif stretch occupies residues Ile265–Asp272. Positions Thr323 to Thr328 are G5 motif.

Belongs to the G-alpha family. G(q) subfamily. In terms of assembly, g proteins are composed of 3 units; alpha, beta and gamma. The alpha chain contains the guanine nucleotide binding site. Mg(2+) is required as a cofactor.

Its function is as follows. Guanine nucleotide-binding proteins (G proteins) are involved as modulators or transducers in various transmembrane signaling systems. This chain is Guanine nucleotide-binding protein subunit alpha (CGP1), found in Coprinellus congregatus (Inky cap fungus).